The following is a 513-amino-acid chain: Serine/threonine-protein kinase ppk8 (513 aa).

The span at Leu-98–Ser-114 shows a compositional bias: low complexity. Residues Leu-98–Asn-120 are disordered. The region spanning Gly-241–Met-505 is the Protein kinase domain. ATP contacts are provided by residues Ile-247–Ile-255 and Lys-270. The active-site Proton acceptor is the Asp-364.

Belongs to the protein kinase superfamily. Ser/Thr protein kinase family.

It is found in the cytoplasm. The protein localises to the nucleus. It catalyses the reaction L-seryl-[protein] + ATP = O-phospho-L-seryl-[protein] + ADP + H(+). The catalysed reaction is L-threonyl-[protein] + ATP = O-phospho-L-threonyl-[protein] + ADP + H(+). The polypeptide is Serine/threonine-protein kinase ppk8 (ppk8) (Schizosaccharomyces pombe (strain 972 / ATCC 24843) (Fission yeast)).